Consider the following 99-residue polypeptide: Small ribosomal subunit protein eS24 (99 aa).

This sequence belongs to the eukaryotic ribosomal protein eS24 family.

The sequence is that of Small ribosomal subunit protein eS24 (rps2e) from Thermoplasma volcanium (strain ATCC 51530 / DSM 4299 / JCM 9571 / NBRC 15438 / GSS1).